Here is a 443-residue protein sequence, read N- to C-terminus: UPF0656 protein C926.02 (443 aa).

Belongs to the UPF0656 family.

The protein resides in the cytoplasm. The protein localises to the nucleus. The protein is UPF0656 protein C926.02 of Schizosaccharomyces pombe (strain 972 / ATCC 24843) (Fission yeast).